A 135-amino-acid chain; its full sequence is Small ribosomal subunit protein bS16 (135 aa).

Belongs to the bacterial ribosomal protein bS16 family.

In Prosthecochloris aestuarii (strain DSM 271 / SK 413), this protein is Small ribosomal subunit protein bS16.